The following is a 1439-amino-acid chain: Myomesin-3 (1439 aa).

Residues 1–57 form a disordered region; the sequence is MTLPHSPGSAGEPQASQTVQVHRLEHRQEEEQKEERQHSLQMGSSVQRRTYRSSEEE. Residues 22–38 are compositionally biased toward basic and acidic residues; that stretch reads HRLEHRQEEEQKEERQH. Over residues 39-48 the composition is skewed to polar residues; it reads SLQMGSSVQR. Residues 119–149 are a coiled coil; the sequence is QRLLRQRRDWKALRQRTEEKVREAKELIELC. Ig-like C2-type domains are found at residues 154-246 and 269-362; these read PWFW…AKVL and PSAE…AYVF. 5 Fibronectin type-III domains span residues 376-471, 504-599, 605-698, 704-799, and 806-901; these read SPLN…TGDY, APTN…LKGK, PPAQ…VKQA, APYD…CKEW, and PPYD…LEDK. Ig-like C2-type domains are found at residues 1122–1207 and 1336–1425; these read PYFQ…LDLT and AKVV…VTIS.

Homodimer. As to expression, mainly expressed in slow muscle, extraocular muscle and embryonic/neonatal skeletal muscle (at protein level). Expression in skeletal muscle is fiber type specific, with the highest levels in type IIA fibers (intermediate speed) and lower levels in type I fibers.

Its subcellular location is the cytoplasm. The protein localises to the myofibril. It is found in the sarcomere. The protein resides in the m line. May link the intermediate filament cytoskeleton to the M-disk of the myofibrils in striated muscle. This Mus musculus (Mouse) protein is Myomesin-3 (Myom3).